Consider the following 271-residue polypeptide: Tryptophan synthase alpha chain (271 aa).

Active-site proton acceptor residues include E49 and D60.

It belongs to the TrpA family. In terms of assembly, tetramer of two alpha and two beta chains.

It catalyses the reaction (1S,2R)-1-C-(indol-3-yl)glycerol 3-phosphate + L-serine = D-glyceraldehyde 3-phosphate + L-tryptophan + H2O. It functions in the pathway amino-acid biosynthesis; L-tryptophan biosynthesis; L-tryptophan from chorismate: step 5/5. Its function is as follows. The alpha subunit is responsible for the aldol cleavage of indoleglycerol phosphate to indole and glyceraldehyde 3-phosphate. The chain is Tryptophan synthase alpha chain from Nitrosococcus oceani (strain ATCC 19707 / BCRC 17464 / JCM 30415 / NCIMB 11848 / C-107).